A 343-amino-acid polypeptide reads, in one-letter code: Heat-inducible transcription repressor HrcA (343 aa).

Belongs to the HrcA family.

In terms of biological role, negative regulator of class I heat shock genes (grpE-dnaK-dnaJ and groELS operons). Prevents heat-shock induction of these operons. The protein is Heat-inducible transcription repressor HrcA of Mycolicibacterium gilvum (strain PYR-GCK) (Mycobacterium gilvum (strain PYR-GCK)).